We begin with the raw amino-acid sequence, 606 residues long: Melanoma-associated antigen D2 (606 aa).

2 disordered regions span residues 1–29 (MSDTSESGAGLTRFQAEASEKDSSSMMQT) and 52–204 (SEDV…GGRR). Serine 2 is modified (N-acetylserine). Serine 5 is subject to Phosphoserine. Phosphothreonine is present on threonine 72. Over residues 79-100 (PATQASSTTQLTDTQVLATENK) the composition is skewed to polar residues. Residues 122–131 (ETKKVSHVAD) show a composition bias toward basic and acidic residues. Positions 142–164 (EAAPSQASADEPEPESAAAQSQE) are enriched in low complexity. Serine 157 carries the phosphoserine modification. A compositionally biased stretch (basic residues) spans 171-181 (KVKAKKARKVK). Phosphoserine is present on residues serine 190, serine 191, serine 194, serine 197, serine 244, and serine 247. Residues 248-260 (PKARRGKARRRAA) are compositionally biased toward basic residues. Residues 248-275 (PKARRGKARRRAAKLQSSQEPEAPPPRD) are disordered. Residues serine 264 and serine 265 each carry the phosphoserine modification. One can recognise an MAGE domain in the interval 279 to 478 (LQGRANDLVK…KEWAAQYREA (200 aa)). The disordered stretch occupies residues 534 to 563 (GAEAKAKAQESGSASTGASTSTNNSASASA).

As to quaternary structure, interacts with GNAS.

In terms of biological role, regulates the expression, localization to the plasma membrane and function of the sodium chloride cotransporters SLC12A1 and SLC12A3, two key components of salt reabsorption in the distal renal tubule. This Pongo abelii (Sumatran orangutan) protein is Melanoma-associated antigen D2 (MAGED2).